The primary structure comprises 29 residues: Ceratotoxin-B (29 aa).

In terms of assembly, homomer of four to six subunits.

The protein localises to the secreted. Functionally, female-specific peptides with potent activity against Gram-positive and Gram-negative bacteria. They have as well hemolytic activity. This chain is Ceratotoxin-B (CTXB), found in Ceratitis capitata (Mediterranean fruit fly).